The chain runs to 193 residues: CDP-diacylglycerol--glycerol-3-phosphate 3-phosphatidyltransferase (193 aa).

4 consecutive transmembrane segments (helical) span residues 8 to 28 (ITLA…APFD), 39 to 59 (IPVA…TDWV), 88 to 108 (AALI…IVII), and 157 to 177 (LVSF…TVVS).

The protein belongs to the CDP-alcohol phosphatidyltransferase class-I family.

The protein localises to the cell membrane. It catalyses the reaction a CDP-1,2-diacyl-sn-glycerol + sn-glycerol 3-phosphate = a 1,2-diacyl-sn-glycero-3-phospho-(1'-sn-glycero-3'-phosphate) + CMP + H(+). It functions in the pathway phospholipid metabolism; phosphatidylglycerol biosynthesis; phosphatidylglycerol from CDP-diacylglycerol: step 1/2. Functionally, this protein catalyzes the committed step to the synthesis of the acidic phospholipids. The polypeptide is CDP-diacylglycerol--glycerol-3-phosphate 3-phosphatidyltransferase (pgsA) (Bacillus subtilis (strain 168)).